Here is an 873-residue protein sequence, read N- to C-terminus: uncharacterized protein (873 aa).

Disordered regions lie at residues Met-1–Lys-24, Ser-175–Ser-251, Pro-375–Pro-423, Asp-506–Ser-540, Asp-568–Tyr-592, Ala-662–Ile-773, and Ala-822–Ile-855. The span at Lys-211–Thr-225 shows a compositional bias: basic and acidic residues. The span at Ser-376 to Glu-385 shows a compositional bias: basic residues. The segment covering Pro-574–Phe-586 has biased composition (basic residues). Residues Ser-665–Ser-686 show a composition bias toward low complexity. Residues Gln-698–Pro-740 show a composition bias toward polar residues. The segment covering Tyr-743 to Glu-755 has biased composition (basic and acidic residues). A compositionally biased stretch (low complexity) spans Ser-758–Ile-773. The span at Asn-823–Ile-855 shows a compositional bias: polar residues.

Its subcellular location is the cytoplasm. It is found in the vacuole membrane. This is an uncharacterized protein from Schizosaccharomyces pombe (strain 972 / ATCC 24843) (Fission yeast).